Reading from the N-terminus, the 101-residue chain is Nucleoid-associated protein Cla_0113 (101 aa).

It belongs to the YbaB/EbfC family. As to quaternary structure, homodimer.

Its subcellular location is the cytoplasm. It localises to the nucleoid. Its function is as follows. Binds to DNA and alters its conformation. May be involved in regulation of gene expression, nucleoid organization and DNA protection. This is Nucleoid-associated protein Cla_0113 from Campylobacter lari (strain RM2100 / D67 / ATCC BAA-1060).